Reading from the N-terminus, the 427-residue chain is Glutamate-1-semialdehyde 2,1-aminomutase 2 (427 aa).

Position 267 is an N6-(pyridoxal phosphate)lysine (lysine 267).

This sequence belongs to the class-III pyridoxal-phosphate-dependent aminotransferase family. HemL subfamily. As to quaternary structure, homodimer. Pyridoxal 5'-phosphate is required as a cofactor.

It localises to the cytoplasm. The catalysed reaction is (S)-4-amino-5-oxopentanoate = 5-aminolevulinate. It functions in the pathway porphyrin-containing compound metabolism; protoporphyrin-IX biosynthesis; 5-aminolevulinate from L-glutamyl-tRNA(Glu): step 2/2. The chain is Glutamate-1-semialdehyde 2,1-aminomutase 2 from Staphylococcus saprophyticus subsp. saprophyticus (strain ATCC 15305 / DSM 20229 / NCIMB 8711 / NCTC 7292 / S-41).